The primary structure comprises 178 residues: Cytidylate kinase (178 aa).

7-15 (GLPGTGTTT) serves as a coordination point for ATP.

This sequence belongs to the cytidylate kinase family. Type 2 subfamily.

The protein resides in the cytoplasm. The enzyme catalyses CMP + ATP = CDP + ADP. It catalyses the reaction dCMP + ATP = dCDP + ADP. This is Cytidylate kinase from Methanococcus aeolicus (strain ATCC BAA-1280 / DSM 17508 / OCM 812 / Nankai-3).